A 300-amino-acid polypeptide reads, in one-letter code: Transcriptional dual regulator GltC (300 aa).

An HTH lysR-type domain is found at 1-58 (MELRQLRYFMEVAEREHVSEAADHLHVAQSAISRQIANLEEELNVTLFEREGRNIKLT). The segment at residues 18–37 (VSEAADHLHVAQSAISRQIA) is a DNA-binding region (H-T-H motif).

The protein belongs to the LysR transcriptional regulatory family. Interacts with gutamate dehydrogenase RocG.

Activated by alpha-ketoglutarate and inhibited by glutamate and by RocG. Functionally, positive regulator of glutamate biosynthesis (gltAB genes). Negatively regulates its own expression. The sequence is that of Transcriptional dual regulator GltC (gltC) from Bacillus subtilis (strain 168).